Here is a 111-residue protein sequence, read N- to C-terminus: Cytochrome c3, 26 kDa (111 aa).

Positions 30, 33, 38, 41, 42, 43, 54, 59, 60, 77, 86, 89, 90, 105, 108, and 109 each coordinate heme c.

As to quaternary structure, homodimer. The cofactor is heme c.

It is found in the periplasm. Participates in sulfate respiration coupled with phosphorylation by transferring electrons from the enzyme dehydrogenase to ferredoxin. The chain is Cytochrome c3, 26 kDa from Desulfomicrobium norvegicum (strain DSM 1741 / NCIMB 8310) (Desulfovibrio baculatus (strain Norway 4)).